We begin with the raw amino-acid sequence, 336 residues long: Ferredoxin--NADP reductase (336 aa).

FAD-binding residues include Asp-37, Gln-45, Tyr-50, Val-90, Phe-124, Asp-286, and Thr-327.

The protein belongs to the ferredoxin--NADP reductase type 2 family. In terms of assembly, homodimer. FAD is required as a cofactor.

The enzyme catalyses 2 reduced [2Fe-2S]-[ferredoxin] + NADP(+) + H(+) = 2 oxidized [2Fe-2S]-[ferredoxin] + NADPH. The polypeptide is Ferredoxin--NADP reductase (Enterococcus faecalis (strain ATCC 700802 / V583)).